Consider the following 559-residue polypeptide: Dihydroxy-acid dehydratase (559 aa).

A [2Fe-2S] cluster-binding site is contributed by Cys-52. Asp-84 contacts Mg(2+). Cys-125 serves as a coordination point for [2Fe-2S] cluster. Mg(2+) is bound by residues Asp-126 and Lys-127. Lys-127 is subject to N6-carboxylysine. Cys-197 provides a ligand contact to [2Fe-2S] cluster. Glu-447 provides a ligand contact to Mg(2+). The active-site Proton acceptor is Ser-473.

This sequence belongs to the IlvD/Edd family. As to quaternary structure, homodimer. Requires [2Fe-2S] cluster as cofactor. Mg(2+) serves as cofactor.

It carries out the reaction (2R)-2,3-dihydroxy-3-methylbutanoate = 3-methyl-2-oxobutanoate + H2O. It catalyses the reaction (2R,3R)-2,3-dihydroxy-3-methylpentanoate = (S)-3-methyl-2-oxopentanoate + H2O. It participates in amino-acid biosynthesis; L-isoleucine biosynthesis; L-isoleucine from 2-oxobutanoate: step 3/4. The protein operates within amino-acid biosynthesis; L-valine biosynthesis; L-valine from pyruvate: step 3/4. Functionally, functions in the biosynthesis of branched-chain amino acids. Catalyzes the dehydration of (2R,3R)-2,3-dihydroxy-3-methylpentanoate (2,3-dihydroxy-3-methylvalerate) into 2-oxo-3-methylpentanoate (2-oxo-3-methylvalerate) and of (2R)-2,3-dihydroxy-3-methylbutanoate (2,3-dihydroxyisovalerate) into 2-oxo-3-methylbutanoate (2-oxoisovalerate), the penultimate precursor to L-isoleucine and L-valine, respectively. The sequence is that of Dihydroxy-acid dehydratase from Roseiflexus castenholzii (strain DSM 13941 / HLO8).